The primary structure comprises 678 residues: uncharacterized protein (678 aa).

Helical transmembrane passes span Leu14–Leu34 and Gly180–Phe200.

Belongs to the mycobacterial PPE family.

It is found in the cell membrane. This is an uncharacterized protein from Mycobacterium tuberculosis (strain ATCC 25618 / H37Rv).